The following is a 94-amino-acid chain: Large ribosomal subunit protein bL25 (94 aa).

This sequence belongs to the bacterial ribosomal protein bL25 family. Part of the 50S ribosomal subunit; part of the 5S rRNA/L5/L18/L25 subcomplex. Contacts the 5S rRNA. Binds to the 5S rRNA independently of L5 and L18.

This is one of the proteins that binds to the 5S RNA in the ribosome where it forms part of the central protuberance. This chain is Large ribosomal subunit protein bL25, found in Escherichia coli (strain K12 / DH10B).